We begin with the raw amino-acid sequence, 514 residues long: Cobyric acid synthase (514 aa).

The region spanning 249-448 is the GATase cobBQ-type domain; sequence LIDIAVIKLP…VHGVFDNDEI (200 aa). Catalysis depends on Cys330, which acts as the Nucleophile. His440 is an active-site residue.

The protein belongs to the CobB/CobQ family. CobQ subfamily.

It functions in the pathway cofactor biosynthesis; adenosylcobalamin biosynthesis. Its function is as follows. Catalyzes amidations at positions B, D, E, and G on adenosylcobyrinic A,C-diamide. NH(2) groups are provided by glutamine, and one molecule of ATP is hydrogenolyzed for each amidation. The sequence is that of Cobyric acid synthase from Ruminiclostridium cellulolyticum (strain ATCC 35319 / DSM 5812 / JCM 6584 / H10) (Clostridium cellulolyticum).